We begin with the raw amino-acid sequence, 415 residues long: Serine hydroxymethyltransferase (415 aa).

(6S)-5,6,7,8-tetrahydrofolate is bound by residues Leu-122 and 126–128 (GHL). Residue Lys-230 is modified to N6-(pyridoxal phosphate)lysine.

The protein belongs to the SHMT family. As to quaternary structure, homodimer. Pyridoxal 5'-phosphate is required as a cofactor.

The protein localises to the cytoplasm. The enzyme catalyses (6R)-5,10-methylene-5,6,7,8-tetrahydrofolate + glycine + H2O = (6S)-5,6,7,8-tetrahydrofolate + L-serine. Its pathway is one-carbon metabolism; tetrahydrofolate interconversion. It participates in amino-acid biosynthesis; glycine biosynthesis; glycine from L-serine: step 1/1. Its function is as follows. Catalyzes the reversible interconversion of serine and glycine with tetrahydrofolate (THF) serving as the one-carbon carrier. This reaction serves as the major source of one-carbon groups required for the biosynthesis of purines, thymidylate, methionine, and other important biomolecules. Also exhibits THF-independent aldolase activity toward beta-hydroxyamino acids, producing glycine and aldehydes, via a retro-aldol mechanism. In Leptothrix cholodnii (strain ATCC 51168 / LMG 8142 / SP-6) (Leptothrix discophora (strain SP-6)), this protein is Serine hydroxymethyltransferase.